Consider the following 101-residue polypeptide: Apolipoprotein C-II (101 aa).

A signal peptide spans 1 to 22; the sequence is MGTRFLLALFLVLLVLGLEVQA. Residues 66–74 are lipid binding; sequence AVDERIRDM. The segment at 78–101 is lipoprotein lipase cofactor; sequence STAAVTTYAGIFTDQLFSMLKGEQ.

The protein belongs to the apolipoprotein C2 family. In terms of processing, proapolipoprotein C-II is synthesized as a sialic acid containing glycoprotein which is subsequently desialylated prior to its proteolytic processing. Post-translationally, proapolipoprotein C-II, the major form found in plasma undergoes proteolytic cleavage of its N-terminal hexapeptide to generate apolipoprotein C-II, which occurs as the minor form in plasma.

Its subcellular location is the secreted. In terms of biological role, component of chylomicrons, very low-density lipoproteins (VLDL), low-density lipoproteins (LDL), and high-density lipoproteins (HDL) in plasma. Plays an important role in lipoprotein metabolism as an activator of lipoprotein lipase. Both proapolipoprotein C-II and apolipoprotein C-II can activate lipoprotein lipase. In Tupaia glis (Common tree shrew), this protein is Apolipoprotein C-II (APOC2).